A 406-amino-acid chain; its full sequence is Endoplasmic reticulum resident protein 44 (406 aa).

The N-terminal stretch at 1-29 is a signal peptide; that stretch reads MHPAVFLSLPDLRCSLLLLVTWVFTPVTT. The 109-residue stretch at 30 to 138 folds into the Thioredoxin domain; it reads EITSLDTENI…VKALADYIRQ (109 aa). 2 cysteine pairs are disulfide-bonded: Cys-189-Cys-241 and Cys-301-Cys-318. The interval 236–285 is interaction with ITPR1; sequence WIQDKCVPLVREITFENGEELTEEGLPFLILFHMKEDTESLEIFQNEVAR. Residues 360–387 are disordered; sequence FHHGPDPTDTAPGEQAQDVASSPPESSF. Positions 377-387 are enriched in polar residues; sequence DVASSPPESSF. The Prevents secretion from ER motif lies at 403–406; that stretch reads RDEL.

As to quaternary structure, forms mixed disulfides with both ERO1A and ERO1B and cargo folding intermediates; the interactions with ERO1A and ERO1B result in their retention in the endoplasmic reticulum. Directly interacts with ITPR1 in a pH-, redox state- and calcium-dependent manner, but not with ITPR2 or ITPR3. The strength of this interaction inversely correlates with calcium concentration.

It localises to the endoplasmic reticulum lumen. Functionally, mediates thiol-dependent retention in the early secretory pathway, forming mixed disulfides with substrate proteins through its conserved CRFS motif. Inhibits the calcium channel activity of ITPR1. May have a role in the control of oxidative protein folding in the endoplasmic reticulum. Required to retain ERO1A and ERO1B in the endoplasmic reticulum. The sequence is that of Endoplasmic reticulum resident protein 44 (ERP44) from Homo sapiens (Human).